A 75-amino-acid chain; its full sequence is Metallothionein-like protein 1 (75 aa).

The protein belongs to the metallothionein superfamily. Type 15 family.

Functionally, metallothioneins have a high content of cysteine residues that bind various heavy metals. The sequence is that of Metallothionein-like protein 1 from Cicer arietinum (Chickpea).